A 406-amino-acid polypeptide reads, in one-letter code: Succinylornithine transaminase (406 aa).

N6-(pyridoxal phosphate)lysine is present on K252.

This sequence belongs to the class-III pyridoxal-phosphate-dependent aminotransferase family. AstC subfamily. Requires pyridoxal 5'-phosphate as cofactor.

It catalyses the reaction N(2)-succinyl-L-ornithine + 2-oxoglutarate = N-succinyl-L-glutamate 5-semialdehyde + L-glutamate. Its pathway is amino-acid degradation; L-arginine degradation via AST pathway; L-glutamate and succinate from L-arginine: step 3/5. Functionally, catalyzes the transamination of N(2)-succinylornithine and alpha-ketoglutarate into N(2)-succinylglutamate semialdehyde and glutamate. Can also act as an acetylornithine aminotransferase. This chain is Succinylornithine transaminase, found in Escherichia coli O7:K1 (strain IAI39 / ExPEC).